A 78-amino-acid chain; its full sequence is Probable [Fe-S]-dependent transcriptional repressor (78 aa).

Iron-sulfur cluster contacts are provided by Cys56, Cys61, Cys64, and Cys70.

This sequence belongs to the FeoC family.

In terms of biological role, may function as a transcriptional regulator that controls feoABC expression. The protein is Probable [Fe-S]-dependent transcriptional repressor of Enterobacter sp. (strain 638).